We begin with the raw amino-acid sequence, 128 residues long: MQRHMLKSKIHRAAVTHCELHYEGSCAIDEDLLEAANIVENERIDIWNINNGERFSTYAIKGERGSGMISLNGSAARRAQLGDLVIIAAFAMIDEQELKAGWKPDLVFVDEDNKIKGSRDHVPTQNWT.

The Schiff-base intermediate with substrate; via pyruvic acid role is filled by Ser-25. Ser-25 is modified (pyruvic acid (Ser)). Residue Thr-57 coordinates substrate. The Proton donor role is filled by Tyr-58. 73-75 (GSA) provides a ligand contact to substrate.

This sequence belongs to the PanD family. In terms of assembly, heterooctamer of four alpha and four beta subunits. Pyruvate is required as a cofactor. Post-translationally, is synthesized initially as an inactive proenzyme, which is activated by self-cleavage at a specific serine bond to produce a beta-subunit with a hydroxyl group at its C-terminus and an alpha-subunit with a pyruvoyl group at its N-terminus.

It localises to the cytoplasm. The enzyme catalyses L-aspartate + H(+) = beta-alanine + CO2. It functions in the pathway cofactor biosynthesis; (R)-pantothenate biosynthesis; beta-alanine from L-aspartate: step 1/1. In terms of biological role, catalyzes the pyruvoyl-dependent decarboxylation of aspartate to produce beta-alanine. This chain is Aspartate 1-decarboxylase, found in Burkholderia pseudomallei (strain 668).